A 448-amino-acid chain; its full sequence is MFSSSVELELFFIFVLVVLNGIFSGSEIAIVSARKVRLEQLAKRGNRKAKLALKLATAPNNFLSAVQIGITLIGILTGAVGGATVALRLAEFLDDIPLLAPYAGPLSISLLVGFITYLSLVVGELVPKRIALSHPEHIACGVAPAMHLVAQLTAPLVYLLGVSTDAVLRLFGITSKEASPITEEEIRVMIEQGAQAGMIDEAEQEMVERVFRLGDRPVKTLMTPRTAIAWLDVESDWEENQQEILDTPYSRFPVGRDSLDECLGFVRVKDILNSQWSGQKINLEEIVQPPLFVAENTRSLHVLEMFRASGTHLALITDEYGGIEGLVTLNDLIEAIVGSIPNDDEIQEPQIIQREDGSYLLDGLLPIDEFKEIFDIETLSNEEEGHYHTLGGFVIESLGKIPQSGDYFVSDTLRVEVVDMDGIRIDKVLVNQLPEDSSTTEEESETDN.

In terms of domain architecture, CNNM transmembrane spans Phe-2–Glu-203. A run of 4 helical transmembrane segments spans residues Phe-11–Val-31, Phe-62–Gly-82, Leu-106–Val-126, and Val-142–Val-162. CBS domains follow at residues Met-222–Ile-281 and Ile-286–Glu-345.

The protein belongs to the UPF0053 family.

It is found in the cell membrane. This is UPF0053 protein sll0260 from Synechocystis sp. (strain ATCC 27184 / PCC 6803 / Kazusa).